A 95-amino-acid chain; its full sequence is Cell division protein FtsB (95 aa).

The Cytoplasmic portion of the chain corresponds to 1-3 (MKW). A helical membrane pass occupies residues 4–21 (VTGLLVVLLLGLQYKLWI). Over 22–95 (GEGSVAEVWQ…QVVGRPGETP (74 aa)) the chain is Periplasmic. Positions 26-73 (VAEVWQLRQTLEAQRAENEELRYRNAALDAEVTDLKTGLDAIEERARR) form a coiled coil.

Belongs to the FtsB family. In terms of assembly, part of a complex composed of FtsB, FtsL and FtsQ.

The protein localises to the cell inner membrane. Its function is as follows. Essential cell division protein. May link together the upstream cell division proteins, which are predominantly cytoplasmic, with the downstream cell division proteins, which are predominantly periplasmic. The polypeptide is Cell division protein FtsB (Thioalkalivibrio sulfidiphilus (strain HL-EbGR7)).